Consider the following 287-residue polypeptide: Cyclopropane mycolic acid synthase 1 (287 aa).

S-adenosyl-L-methionine-binding positions include Tyr33–Ser34, Leu68–Gly76, Thr94–Gln99, and Trp123–Glu124. The active site involves Cys269.

Belongs to the CFA/CMAS family. Homodimer.

It is found in the cytoplasm. It carries out the reaction a 1-acyl-2-(9Z)-enoyl-sn-glycero-3-phospholipid + S-adenosyl-L-methionine = a 1-acyl-2-(9-cyclopronane)-acyl-sn-glycero-3-phospholipid + S-adenosyl-L-homocysteine + H(+). It functions in the pathway lipid metabolism; mycolic acid biosynthesis. Its function is as follows. Catalyzes the conversion of a double bond to a cyclopropane ring at the distal position of an alpha mycolic acid via the transfer of a methylene group from S-adenosyl-L-methionine. Cyclopropanated mycolic acids are key factors participating in cell envelope permeability, host immunomodulation and persistence. The polypeptide is Cyclopropane mycolic acid synthase 1 (cmaA1) (Mycobacterium tuberculosis (strain ATCC 25177 / H37Ra)).